The following is a 226-amino-acid chain: Cell division protein SepF (226 aa).

The disordered stretch occupies residues 20–116 (RAYDDAGYDK…ESLTYHTRDN (97 aa)). Residues 22-44 (YDDAGYDKGGYRESRYRSSRYSE) show a composition bias toward basic and acidic residues. Residues 45–56 (DFGDEDDEDEEA) show a composition bias toward acidic residues. The span at 62-95 (RRGDRSRLERAAARSGDVDHNVEGEQPERVERAS) shows a compositional bias: basic and acidic residues. Over residues 97–111 (RSITRSAEPSESLTY) the composition is skewed to polar residues.

The protein belongs to the SepF family. Homodimer. Interacts with FtsZ.

The protein resides in the cytoplasm. Cell division protein that is part of the divisome complex and is recruited early to the Z-ring. Probably stimulates Z-ring formation, perhaps through the cross-linking of FtsZ protofilaments. Its function overlaps with FtsA. The polypeptide is Cell division protein SepF (Salinispora arenicola (strain CNS-205)).